The chain runs to 180 residues: Crossover junction endodeoxyribonuclease RuvC (180 aa).

Catalysis depends on residues Asp-7, Glu-66, and Asp-138. Mg(2+) contacts are provided by Asp-7, Glu-66, and Asp-138.

It belongs to the RuvC family. Homodimer which binds Holliday junction (HJ) DNA. The HJ becomes 2-fold symmetrical on binding to RuvC with unstacked arms; it has a different conformation from HJ DNA in complex with RuvA. In the full resolvosome a probable DNA-RuvA(4)-RuvB(12)-RuvC(2) complex forms which resolves the HJ. Mg(2+) is required as a cofactor.

It is found in the cytoplasm. The catalysed reaction is Endonucleolytic cleavage at a junction such as a reciprocal single-stranded crossover between two homologous DNA duplexes (Holliday junction).. Its function is as follows. The RuvA-RuvB-RuvC complex processes Holliday junction (HJ) DNA during genetic recombination and DNA repair. Endonuclease that resolves HJ intermediates. Cleaves cruciform DNA by making single-stranded nicks across the HJ at symmetrical positions within the homologous arms, yielding a 5'-phosphate and a 3'-hydroxyl group; requires a central core of homology in the junction. The consensus cleavage sequence is 5'-(A/T)TT(C/G)-3'. Cleavage occurs on the 3'-side of the TT dinucleotide at the point of strand exchange. HJ branch migration catalyzed by RuvA-RuvB allows RuvC to scan DNA until it finds its consensus sequence, where it cleaves and resolves the cruciform DNA. This is Crossover junction endodeoxyribonuclease RuvC from Burkholderia pseudomallei (strain 668).